A 535-amino-acid chain; its full sequence is Bifunctional purine biosynthesis protein PurH (535 aa).

Positions 6 to 151 constitute an MGS-like domain; it reads TRLPVRRALI…KNHKDVAIVV (146 aa).

It belongs to the PurH family.

It catalyses the reaction (6R)-10-formyltetrahydrofolate + 5-amino-1-(5-phospho-beta-D-ribosyl)imidazole-4-carboxamide = 5-formamido-1-(5-phospho-D-ribosyl)imidazole-4-carboxamide + (6S)-5,6,7,8-tetrahydrofolate. It carries out the reaction IMP + H2O = 5-formamido-1-(5-phospho-D-ribosyl)imidazole-4-carboxamide. The protein operates within purine metabolism; IMP biosynthesis via de novo pathway; 5-formamido-1-(5-phospho-D-ribosyl)imidazole-4-carboxamide from 5-amino-1-(5-phospho-D-ribosyl)imidazole-4-carboxamide (10-formyl THF route): step 1/1. It participates in purine metabolism; IMP biosynthesis via de novo pathway; IMP from 5-formamido-1-(5-phospho-D-ribosyl)imidazole-4-carboxamide: step 1/1. The protein is Bifunctional purine biosynthesis protein PurH of Azotobacter vinelandii (strain DJ / ATCC BAA-1303).